The primary structure comprises 887 residues: Pre-mRNA-splicing factor cwf22 (887 aa).

Residues 1–27 (MEKEDKSFGIGMLDYNRENPESSGHSR) are disordered. In terms of domain architecture, MIF4G spans 124–307 (KKSINGLINK…EVLFQTRKDK (184 aa)). Residues 366 to 401 (ILGEEDDDENEEDEEDSEETSESEEDESVNDEKPQV) are disordered. Residues 368–394 (GEEDDDENEEDEEDSEETSESEEDESV) show a composition bias toward acidic residues. The region spanning 411 to 527 (NLRKSIYLTI…GWEVYDCVRL (117 aa)) is the MI domain. 2 disordered regions span residues 607-834 (MPKS…KTYH) and 867-887 (GELY…PRAD). Residues 618–662 (EGYSSGSETGSTYSSSYSSTYSRGRSYSRSTRSYSKSRSYSRSRS) show a composition bias toward low complexity. At serine 662 the chain carries Phosphoserine. Threonine 664 is subject to Phosphothreonine. Positions 677-690 (KDRELSPRGRERSS) are enriched in basic and acidic residues. Positions 691–712 (NRNSYSDLSRSSSLSRGRSRSY) are enriched in low complexity. Residues 717–726 (RLIESEDKGY) are compositionally biased toward basic and acidic residues. Residues 736–746 (RKYRSRQRYRR) are compositionally biased toward basic residues. Composition is skewed to low complexity over residues 747–762 (SYAG…SRSP) and 769–791 (SMSC…SRSP). The segment covering 799-809 (DSLSYNRQYSP) has biased composition (polar residues).

Belongs to the CWC22 family. As to quaternary structure, belongs to the 40S cdc5-associated complex (or cwf complex), a spliceosome sub-complex reminiscent of a late-stage spliceosome composed of the U2, U5 and U6 snRNAs and at least brr2, cdc5, cwf2/prp3, cwf3/syf1, cwf4/syf3, cwf5/ecm2, spp42/cwf6, cwf7/spf27, cwf8, cwf9, cwf10, cwf11, cwf12, prp45/cwf13, cwf14, cwf15, cwf16, cwf17, cwf18, cwf19, cwf20, cwf21, cwf22, cwf23, cwf24, cwf25, cwf26, cyp7/cwf27, cwf28, cwf29/ist3, lea1, msl1, prp5/cwf1, prp10, prp12/sap130, prp17, prp22, sap61, sap62, sap114, sap145, slu7, smb1, smd1, smd3, smf1, smg1 and syf2.

The protein localises to the cytoplasm. It is found in the nucleus. Functionally, may be involved in pre-mRNA splicing. The sequence is that of Pre-mRNA-splicing factor cwf22 (cwf22) from Schizosaccharomyces pombe (strain 972 / ATCC 24843) (Fission yeast).